We begin with the raw amino-acid sequence, 215 residues long: Glycerol-3-phosphate acyltransferase (215 aa).

Helical transmembrane passes span 3 to 23 (LILL…LWIG), 42 to 61 (TNTF…LIDI), 68 to 90 (TLLP…FAVL), 110 to 130 (AGVL…VFVL), 134 to 154 (LFSM…ISVL), and 162 to 182 (LLPG…AIII).

It belongs to the PlsY family. Probably interacts with PlsX.

It is found in the cell membrane. It carries out the reaction an acyl phosphate + sn-glycerol 3-phosphate = a 1-acyl-sn-glycero-3-phosphate + phosphate. The protein operates within lipid metabolism; phospholipid metabolism. Functionally, catalyzes the transfer of an acyl group from acyl-phosphate (acyl-PO(4)) to glycerol-3-phosphate (G3P) to form lysophosphatidic acid (LPA). This enzyme utilizes acyl-phosphate as fatty acyl donor, but not acyl-CoA or acyl-ACP. The chain is Glycerol-3-phosphate acyltransferase from Streptococcus equi subsp. zooepidemicus (strain MGCS10565).